The sequence spans 890 residues: Leucine--tRNA ligase (890 aa).

A 'HIGH' region motif is present at residues Pro48–His58. A 'KMSKS' region motif is present at residues Lys645–Ser649. Lys648 lines the ATP pocket.

The protein belongs to the class-I aminoacyl-tRNA synthetase family.

The protein resides in the cytoplasm. It catalyses the reaction tRNA(Leu) + L-leucine + ATP = L-leucyl-tRNA(Leu) + AMP + diphosphate. This Polynucleobacter asymbioticus (strain DSM 18221 / CIP 109841 / QLW-P1DMWA-1) (Polynucleobacter necessarius subsp. asymbioticus) protein is Leucine--tRNA ligase.